A 293-amino-acid chain; its full sequence is Ribokinase (293 aa).

Substrate is bound by residues Ser-11–Asp-13, Gly-39–Asn-43, and Glu-139. ATP-binding positions include Asn-183 and Thr-210–Gly-215. The K(+) site is built by Asp-236 and Thr-238. ATP-binding positions include Gly-241–Asp-242 and Asn-266. Residue Asp-242 participates in substrate binding. The active-site Proton acceptor is Asp-242. K(+) is bound by residues Ser-272, Ser-275, and Gly-277.

This sequence belongs to the carbohydrate kinase PfkB family. Ribokinase subfamily. In terms of assembly, homodimer. The cofactor is Mg(2+).

It is found in the cytoplasm. The catalysed reaction is D-ribose + ATP = D-ribose 5-phosphate + ADP + H(+). It participates in carbohydrate metabolism; D-ribose degradation; D-ribose 5-phosphate from beta-D-ribopyranose: step 2/2. Activated by a monovalent cation that binds near, but not in, the active site. The most likely occupant of the site in vivo is potassium. Ion binding induces a conformational change that may alter substrate affinity. Functionally, catalyzes the phosphorylation of ribose at O-5 in a reaction requiring ATP and magnesium. The resulting D-ribose-5-phosphate can then be used either for sythesis of nucleotides, histidine, and tryptophan, or as a component of the pentose phosphate pathway. This chain is Ribokinase, found in Bacillus subtilis (strain 168).